We begin with the raw amino-acid sequence, 148 residues long: Probable histone H2B.1 (148 aa).

A compositionally biased stretch (basic and acidic residues) spans 1 to 32 (MAPKGEKKPAEKKPAEEKKSTVAEKAPAEKKP). Positions 1–57 (MAPKGEKKPAEKKPAEEKKSTVAEKAPAEKKPKAGKKLPKEGGSAAGEKKKKRSKKS) are disordered. N6-acetyllysine occurs at positions 7, 36, and 37. A Glycyl lysine isopeptide (Lys-Gly) (interchain with G-Cter in ubiquitin) cross-link involves residue lysine 144.

This sequence belongs to the histone H2B family. As to quaternary structure, the nucleosome is a histone octamer containing two molecules each of H2A, H2B, H3 and H4 assembled in one H3-H4 heterotetramer and two H2A-H2B heterodimers. The octamer wraps approximately 147 bp of DNA. Post-translationally, can be acetylated to form H2BK6ac, H2BK33ac and H2BK34ac. Monoubiquitinated to form H2BK143ub1; may give a specific tag for epigenetic transcriptional activation.

It localises to the nucleus. Its subcellular location is the chromosome. In terms of biological role, core component of nucleosome. Nucleosomes wrap and compact DNA into chromatin, limiting DNA accessibility to the cellular machineries which require DNA as a template. Histones thereby play a central role in transcription regulation, DNA repair, DNA replication and chromosomal stability. DNA accessibility is regulated via a complex set of post-translational modifications of histones, also called histone code, and nucleosome remodeling. The polypeptide is Probable histone H2B.1 (Medicago truncatula (Barrel medic)).